The sequence spans 216 residues: Somatotropin (216 aa).

The first 25 residues, 1–25 (MAPGSWFSPLLIAVVTLGLPQGAAA), serve as a signal peptide directing secretion. His-45 provides a ligand contact to Zn(2+). A disulfide bridge connects residues Cys-78 and Cys-189. Position 198 (Glu-198) interacts with Zn(2+). The cysteines at positions 206 and 214 are disulfide-linked.

Belongs to the somatotropin/prolactin family. In terms of tissue distribution, pituitary gland.

It is found in the secreted. Growth hormone plays an important role in growth control. The polypeptide is Somatotropin (GH) (Meleagris gallopavo (Wild turkey)).